Consider the following 621-residue polypeptide: MIFIPVMKEFFDIVVIGGGHAGCEAAAVAARMGAKTALVTMDSEQIGAMSCNPAIGGLGKGHLVREIDAWDGLMPHAADYAAIHYRMLNRSKGSAVQGPRIQADRNRYKKAIQTALKEQAHLTIIEGMAESFQMDKGKVKAVLLADGRPLKTESVVLTTGTFLDAWLFCGEKKWRGGRIGEQPSIGLAEQLKALDLPLGRLKTGTPARLDGRTIDWARLQRQPSDEDAWTMASYGAGRVAPQIACSLTRSNQKTHDIIRAGLDRSPLFSGAIEGRGPRYCPSIEDKIMKFGDRDGHQIFLEPEGLDTPLIYPNGISTSLPEDVQQAFINSIEGLENTKIVQFGYAVEYEFIDPRSLTHQLELKALKSVFCAGQINGTTGYEEAAAQGLVAGISAACAVAGKAPPVFDRRNSYIGVMIDDLVLQGVTEPYRMLTARAEYRLGLRADNAVTRLSGQAKAFGALGAEMTDFVTKRLAEREKCQKLLEKAASSRDMQAVGANVTEGASHSLFEWLRFPAVTRQHLEALIPELTEFSDAVVSEIIDDGRYAPYLERQDAELARLAGHDNMPLPAELDYATIAGLSNEMVEKFSAARPPDMASASRVRGVTPAALAAILIHAKKVTL.

17–22 lines the FAD pocket; the sequence is GGGHAG. 276-290 is a binding site for NAD(+); sequence GPRYCPSIEDKIMKF.

The protein belongs to the MnmG family. In terms of assembly, homodimer. Heterotetramer of two MnmE and two MnmG subunits. Requires FAD as cofactor.

The protein resides in the cytoplasm. Its function is as follows. NAD-binding protein involved in the addition of a carboxymethylaminomethyl (cmnm) group at the wobble position (U34) of certain tRNAs, forming tRNA-cmnm(5)s(2)U34. The sequence is that of tRNA uridine 5-carboxymethylaminomethyl modification enzyme MnmG from Zymomonas mobilis subsp. mobilis (strain ATCC 31821 / ZM4 / CP4).